The chain runs to 223 residues: B-cell antigen receptor complex-associated protein alpha chain (223 aa).

The first 31 residues, 1–31 (MPEGPQALQSPPATIFLLLISAAGLGPGCQA), serve as a signal peptide directing secretion. Residues 32 to 120 (LWVEWGPPSV…KIQRSCGTYL (89 aa)) enclose the Ig-like C2-type domain. Residues 32–140 (LWVEWGPPSV…LDMGEGTKNN (109 aa)) are Extracellular-facing. C53 and C104 form a disulfide bridge. Residues N56, N61, N71, and N95 are each glycosylated (N-linked (GlcNAc...) asparagine). The chain crosses the membrane as a helical span at residues 141–161 (IITAEGIILLICAVVPGTLLL). The Cytoplasmic segment spans residues 162–223 (FRKRWQNMKF…HIGDAQLEKP (62 aa)). The 29-residue stretch at 174-202 (DIQDDYEDENLYEGLNLDDCSMYEDISRG) folds into the ITAM domain. Y185 is subject to Phosphotyrosine; by SRC-type Tyr-kinases. Y196 carries the post-translational modification Phosphotyrosine. At R201 the chain carries Asymmetric dimethylarginine; by PRMT1. A Phosphotyrosine; by Tyr-kinases modification is found at Y207.

As to quaternary structure, heterodimer of alpha and beta chains; disulfide-linked. Part of the B-cell antigen receptor complex where the alpha/beta chain heterodimer is non-covalently associated with an antigen-specific membrane-bound surface immunoglobulin of two heavy chains and two light chains. Interacts through its phosphorylated ITAM domain with the SH2 domains of SYK which stimulates SYK autophosphorylation and activation. Also interacts, when phosphorylated on Tyr-207, with the SH2 domain of BLNK/SLP65, bringing BLNK into proximity with SYK and allowing SYK to phosphorylate BLNK which is necessary for trafficking of the BCR to late endosomes. Interacts with Src-family tyrosine kinases including FYN and LYN, increasing their activity. Post-translationally, phosphorylated on tyrosine, serine and threonine residues upon B-cell activation. Phosphorylation of tyrosine residues by Src-family kinases, including LYN, is an early and essential feature of the BCR signaling cascade. The phosphorylated tyrosines serve as docking sites for SH2-domain containing kinases, leading to their activation which in turn leads to phosphorylation of downstream targets. Phosphorylation of serine and threonine residues may prevent subsequent tyrosine phosphorylation. Arginine methylation in the ITAM domain may interfere with the binding of SYK. It promotes signals leading to B-cell differentiation. As to expression, B-cells.

The protein resides in the cell membrane. Functionally, required in cooperation with CD79B for initiation of the signal transduction cascade activated by binding of antigen to the B-cell antigen receptor complex (BCR) which leads to internalization of the complex, trafficking to late endosomes and antigen presentation. Also required for BCR surface expression and for efficient differentiation of pro- and pre-B-cells. Stimulates SYK autophosphorylation and activation. Binds to BLNK, bringing BLNK into proximity with SYK and allowing SYK to phosphorylate BLNK. Also interacts with and increases activity of some Src-family tyrosine kinases. Represses BCR signaling during development of immature B-cells. The sequence is that of B-cell antigen receptor complex-associated protein alpha chain (CD79A) from Bos taurus (Bovine).